We begin with the raw amino-acid sequence, 590 residues long: L-asparaginase (590 aa).

The Asparaginase/glutaminase domain occupies 6-357 (AHVLVLYTGG…VEKKAMMVKN (352 aa)). Catalysis depends on T16, which acts as the O-isoaspartyl threonine intermediate. Residues 44 to 351 (NDDDYVSTYY…KDCWELVEKK (308 aa)) form an asparaginase region. Residues 85–87 (DSS) and 117–118 (TD) contribute to the substrate site. ANK repeat units follow at residues 398 to 427 (IFPQ…DLSV), 431 to 460 (NGRN…SFHL), 497 to 526 (RLGV…DINQ), and 530 to 559 (NGET…DPYK).

This sequence in the N-terminal section; belongs to the asparaginase 1 family. May be present in the larval cuticle.

It catalyses the reaction L-asparagine + H2O = L-aspartate + NH4(+). In Dirofilaria immitis (Canine heartworm), this protein is L-asparaginase.